The primary structure comprises 158 residues: Endoribonuclease YbeY (158 aa).

The Zn(2+) site is built by His-117, His-121, and His-127.

This sequence belongs to the endoribonuclease YbeY family. Requires Zn(2+) as cofactor.

The protein resides in the cytoplasm. Functionally, single strand-specific metallo-endoribonuclease involved in late-stage 70S ribosome quality control and in maturation of the 3' terminus of the 16S rRNA. This Buchnera aphidicola subsp. Schizaphis graminum (strain Sg) protein is Endoribonuclease YbeY.